Here is a 340-residue protein sequence, read N- to C-terminus: Putative UPF0607 protein ENSP00000332738 (340 aa).

Over residues 75–90 the composition is skewed to basic and acidic residues; that stretch reads VRAEEPKEATEVKDQV. Disordered regions lie at residues 75–130 and 215–281; these read VRAE…NPRP and GLLM…KLPC. Over residues 91-126 the composition is skewed to polar residues; that stretch reads ETQGQEDNKTGPCSNGKAASTSRPLETQGNLTSSWY. Residues 228–241 show a composition bias toward low complexity; it reads PAALRSSRSSPPRA. Residues 242–251 show a composition bias toward basic residues; it reads AGHRPRKRKL. Positions 254-266 are enriched in low complexity; the sequence is PPLQLQQTPPLQL.

The protein belongs to the UPF0607 family.

The polypeptide is Putative UPF0607 protein ENSP00000332738 (Homo sapiens (Human)).